A 513-amino-acid chain; its full sequence is Na(+)/H(+) antiporter NhaB (513 aa).

A run of 12 helical transmembrane segments spans residues 23–43 (LALI…PFVA), 52–72 (IFTL…LLAI), 97–117 (LLLM…LFIF), 120–140 (LLLS…AAAF), 144–164 (FLDA…FYGI), 202–222 (LMMH…VGEP), 238–258 (FFLR…LTCL), 303–323 (AIIG…VGLI), 348–368 (TESL…AVII), 391–411 (LFYI…VGTI), 447–467 (ATPN…APLI), and 475–495 (VWMA…CVEF).

This sequence belongs to the NhaB Na(+)/H(+) (TC 2.A.34) antiporter family.

It localises to the cell inner membrane. It catalyses the reaction 2 Na(+)(in) + 3 H(+)(out) = 2 Na(+)(out) + 3 H(+)(in). Na(+)/H(+) antiporter that extrudes sodium in exchange for external protons. The polypeptide is Na(+)/H(+) antiporter NhaB (Shigella boydii serotype 18 (strain CDC 3083-94 / BS512)).